The primary structure comprises 221 residues: Probable septum site-determining protein MinC (221 aa).

It belongs to the MinC family. Interacts with MinD and FtsZ.

In terms of biological role, cell division inhibitor that blocks the formation of polar Z ring septums. Rapidly oscillates between the poles of the cell to destabilize FtsZ filaments that have formed before they mature into polar Z rings. Prevents FtsZ polymerization. The chain is Probable septum site-determining protein MinC from Shewanella halifaxensis (strain HAW-EB4).